A 510-amino-acid polypeptide reads, in one-letter code: Inositol-3-phosphate synthase (510 aa).

The NAD(+) site is built by Gly70, Gly71, Asn72, Asn73, Asp143, Ile180, Gln190, Arg193, Thr230, Ala231, Asn232, Thr233, Gly281, Ser282, Asp306, Ser309, Asn340, Asn341, Asp342, Lys355, Ala393, Asp394, Asp422, and Ser423.

Belongs to the myo-inositol 1-phosphate synthase family. NAD(+) serves as cofactor.

The protein resides in the cytoplasm. Its subcellular location is the cytosol. It localises to the nucleus. The catalysed reaction is D-glucose 6-phosphate = 1D-myo-inositol 3-phosphate. Its pathway is polyol metabolism; myo-inositol biosynthesis; myo-inositol from D-glucose 6-phosphate: step 1/2. In terms of biological role, key enzyme in myo-inositol biosynthesis pathway that catalyzes the conversion of glucose 6-phosphate to 1-myo-inositol 1-phosphate in a NAD-dependent manner. The sequence is that of Inositol-3-phosphate synthase from Brassica napus (Rape).